The primary structure comprises 320 residues: MSVGFIGAGQLACALARGFTAAGVLSAHKIIASSPEMDLPTVSALRKMGVNLTRSNKDTVRHSDVLFLAVKPHIIPFILDEIGADVQERHIVVSCAAGVTISSVEKKLMAFQPAPKVIRCMTNTPVVVREGATVYATGTHALVEDGKLLEQLMSSVGFCTEVEEDLIDAITGLSGSGPAYAFMALDALADGGVKMGVPRRLAVRLGAQALLGAAKMLLDSEDHPGQLKDNVCSPGGATIHALHFLESGGFRSLLINAVEASCIRTRELQSMADQEKVSPAALKKTLLDRVKLESPTVSTLAPPSSGKLLTRNPAQGSKRE.

Ser-2 is subject to N-acetylserine. NADP(+) contacts are provided by residues 6–11 (IGAGQL) and Ser-34. 9 residues coordinate NADPH: Ala-8, Gln-10, Leu-11, Ser-34, Glu-36, Asn-56, Val-70, Lys-71, and Ala-97. NADP(+)-binding positions include Asn-56, 69 to 72 (AVKP), and 95 to 97 (CAA). Glu-164 serves as a coordination point for L-proline. Asn-230 contacts NADPH. Positions 237 and 238 each coordinate L-proline. The disordered stretch occupies residues 293–320 (ESPTVSTLAPPSSGKLLTRNPAQGSKRE). Phosphoserine is present on Ser-304.

Belongs to the pyrroline-5-carboxylate reductase family. In terms of assembly, homodecamer; composed of 5 homodimers. Interacts with LTO1.

Its subcellular location is the cytoplasm. The protein localises to the mitochondrion. It catalyses the reaction L-proline + NADP(+) = (S)-1-pyrroline-5-carboxylate + NADPH + 2 H(+). The catalysed reaction is L-proline + NAD(+) = (S)-1-pyrroline-5-carboxylate + NADH + 2 H(+). The protein operates within amino-acid biosynthesis; L-proline biosynthesis; L-proline from L-glutamate 5-semialdehyde: step 1/1. Oxidoreductase that catalyzes the last step in proline biosynthesis, which corresponds to the reduction of pyrroline-5-carboxylate to L-proline using NAD(P)H. At physiologic concentrations, has higher specific activity in the presence of NADH. Involved in cellular response to oxidative stress. In some cell types, such as erythrocytes, its primary function may be the generation of NADP(+). The chain is Pyrroline-5-carboxylate reductase 2 from Rattus norvegicus (Rat).